A 251-amino-acid chain; its full sequence is Putative cysteine-rich repeat secretory protein 36 (251 aa).

The signal sequence occupies residues methionine 1–serine 28. 2 consecutive Gnk2-homologous domains span residues tyrosine 35–proline 139 and tyrosine 144–phenylalanine 248.

This sequence belongs to the cysteine-rich repeat secretory protein family.

It is found in the secreted. The sequence is that of Putative cysteine-rich repeat secretory protein 36 (CRRSP36) from Arabidopsis thaliana (Mouse-ear cress).